A 211-amino-acid chain; its full sequence is Imidazole glycerol phosphate synthase subunit HisH (211 aa).

A Glutamine amidotransferase type-1 domain is found at 3–211 (VIAVVDYEMG…VAQVREKIPA (209 aa)). C81 serves as the catalytic Nucleophile. Catalysis depends on residues H186 and E188.

Heterodimer of HisH and HisF.

Its subcellular location is the cytoplasm. It catalyses the reaction 5-[(5-phospho-1-deoxy-D-ribulos-1-ylimino)methylamino]-1-(5-phospho-beta-D-ribosyl)imidazole-4-carboxamide + L-glutamine = D-erythro-1-(imidazol-4-yl)glycerol 3-phosphate + 5-amino-1-(5-phospho-beta-D-ribosyl)imidazole-4-carboxamide + L-glutamate + H(+). The enzyme catalyses L-glutamine + H2O = L-glutamate + NH4(+). The protein operates within amino-acid biosynthesis; L-histidine biosynthesis; L-histidine from 5-phospho-alpha-D-ribose 1-diphosphate: step 5/9. Functionally, IGPS catalyzes the conversion of PRFAR and glutamine to IGP, AICAR and glutamate. The HisH subunit catalyzes the hydrolysis of glutamine to glutamate and ammonia as part of the synthesis of IGP and AICAR. The resulting ammonia molecule is channeled to the active site of HisF. In Nostoc punctiforme (strain ATCC 29133 / PCC 73102), this protein is Imidazole glycerol phosphate synthase subunit HisH.